The following is a 364-amino-acid chain: Spermatogenesis-associated protein 22 (364 aa).

Composition is skewed to polar residues over residues 1-13 (MKRN…TRST), 30-48 (QPLT…NASD), 73-108 (KTVN…SKSD), 137-169 (LMTN…LPNQ), and 177-189 (QTKS…STMR). 2 disordered regions span residues 1–51 (MKRN…DNYD) and 70–189 (PLTK…STMR).

Component of a multiprotein complex with MEIOB and RPA2. Interacts with MEIOB. Interacts with the complex BRME1:HSF2BP:BRCA2.

The protein localises to the chromosome. Meiosis-specific protein required for homologous recombination in meiosis I. This Bos taurus (Bovine) protein is Spermatogenesis-associated protein 22 (SPATA22).